Consider the following 1715-residue polypeptide: Neurexin-2 (1715 aa).

A signal peptide spans 1 to 29 (MALGSRWRPPPQLPPLLLLLALVAGVRGL). The Laminin G-like 1 domain maps to 30–206 (EFGGGPGQWA…LRGAAADPLC (177 aa)). Over 30–1639 (EFGGGPGQWA…EVIRESSSTT (1610 aa)) the chain is Extracellular. A glycan (N-linked (GlcNAc...) asparagine) is linked at N60. Residues 202 to 242 (ADPLCAPARNPCANGGLCTVLAPGEVGCDCSHTGFGGKFCS) form the EGF-like 1 domain. Cystine bridges form between C206–C219, C213–C229, and C231–C241. Laminin G-like domains lie at 289-486 (VATF…SFRC) and 493-686 (DPVT…APFC). A Ca(2+)-binding site is contributed by D335. The N-linked (GlcNAc...) asparagine glycan is linked to N338. Residues L352 and M420 each coordinate Ca(2+). 5 disulfide bridges follow: C450-C486, C657-C686, C694-C705, C699-C714, and C716-C726. One can recognise an EGF-like 2 domain in the interval 690-727 (TLKQCASAPCRNGGICREGWNRFVCDCIGTGFLGRVCE). 2 Laminin G-like domains span residues 732 to 907 (VLSY…ITYC) and 921 to 1096 (DPVT…ERGC). Positions 779 and 796 each coordinate Ca(2+). A glycan (N-linked (GlcNAc...) asparagine) is linked at N844. Residue R857 participates in Ca(2+) binding. 4 disulfides stabilise this stretch: C1068–C1096, C1103–C1114, C1108–C1123, and C1125–C1135. An EGF-like 3 domain is found at 1099-1136 (PSTTCTEESCANQGVCLQQWDGFTCDCTMTSYGGPVCN). The region spanning 1140–1348 (TTYIFGKGGA…HLRLVGEGPS (209 aa)) is the Laminin G-like 6 domain. The Ca(2+) site is built by D1192 and V1209. Residue N1239 is glycosylated (N-linked (GlcNAc...) asparagine). Ca(2+)-binding residues include I1291 and N1293. A glycan (O-linked (Xyl...) (heparan sulfate) serine) is linked at S1403. 3 disordered regions span residues 1461-1511 (ATQD…LPPT), 1529-1549 (LLSP…ATGA), and 1583-1626 (LGPG…RGPP). Residues 1640–1660 (GMVVGIVAAAALCILILLYAM) form a helical membrane-spanning segment. The Cytoplasmic portion of the chain corresponds to 1661–1715 (YKYRNRDEGSYQVDQSRNYISNSAQSNGAVVKEKAPAAPKTPSKAKKNKDKEYYV). The tract at residues 1682–1715 (NSAQSNGAVVKEKAPAAPKTPSKAKKNKDKEYYV) is disordered.

This sequence belongs to the neurexin family. The laminin G-like domain 1 binds to NXPH1. Interacts with PATJ. Interacts with CBLN1, CBLN2 and, less avidly, with CBLN4. Specific isoforms bind neuroligins NLGN1, NLGN2 and NLGN3. Isoform 5c/alpha-2C binds to alpha-dystroglycan. Interacts (via Laminin G-like 1 domain) with IGSF21 (Ig-like 1 domain) in a trans-interaction manner. Interacts with CLSTN3. In terms of processing, O-glycosylated; contains heparan sulfate. Heparan sulfate attachment is required for synapse development by mediating interactions with neuroligins. Brain (neuronal synapse).

Its subcellular location is the presynaptic cell membrane. In terms of biological role, neuronal cell surface protein that may be involved in cell recognition and cell adhesion. May mediate intracellular signaling. The chain is Neurexin-2 (Nrxn2) from Rattus norvegicus (Rat).